The chain runs to 332 residues: Palmitoyltransferase ZDHHC15B (332 aa).

At 1–14 the chain is on the cytoplasmic side; the sequence is MALSRALRCCQRIF. Residues 15 to 35 form a helical membrane-spanning segment; that stretch reads SWIPVIIISSVVLWSYYAYVF. Topologically, residues 36–50 are lumenal; the sequence is ELCFVTLSNNLERVT. A helical membrane pass occupies residues 51 to 71; it reads YLLIFHVCFIMFCWTYWKAIF. The Cytoplasmic portion of the chain corresponds to 72–166; that stretch reads TPPSTPTKKF…NNCVGFSNYK (95 aa). The DHHC domain occupies 123–173; sequence RFCDRCQVIKPDRCHHCSVCETCVLKMDHHCPWVNNCVGFSNYKFFLLFLS. Residues C125 and C128 each coordinate Zn(2+). K132 provides a ligand contact to substrate. Zn(2+) contacts are provided by H138, C139, C142, C145, and H152. The active-site S-palmitoyl cysteine intermediate is the C153. Zn(2+) is bound at residue C159. The chain crosses the membrane as a helical span at residues 167–187; that stretch reads FFLLFLSYSMIYCVFIASTVF. The Lumenal portion of the chain corresponds to 188 to 204; that stretch reads QYFLKFWVGDLPNGPAK. A helical membrane pass occupies residues 205 to 228; the sequence is FHVLFLLFVALMFFVSLMFLFGYH. Residues 229 to 332 lie on the Cytoplasmic side of the membrane; that stretch reads CWLVAKNRST…GSSLLIRTES (104 aa). Residues 305 to 332 are disordered; that stretch reads EEKWVEDGGSDEESADENGSSLLIRTES.

Belongs to the DHHC palmitoyltransferase family. In terms of processing, autopalmitoylated (in vitro).

It is found in the golgi apparatus membrane. The protein resides in the postsynaptic density. It carries out the reaction L-cysteinyl-[protein] + hexadecanoyl-CoA = S-hexadecanoyl-L-cysteinyl-[protein] + CoA. The enzyme catalyses L-cysteinyl-[protein] + tetradecanoyl-CoA = S-tetradecanoyl-L-cysteinyl-[protein] + CoA. It catalyses the reaction L-cysteinyl-[protein] + octadecanoyl-CoA = S-octadecanoyl-L-cysteinyl-[protein] + CoA. Its function is as follows. Palmitoyltransferase that catalyzes the addition of palmitate onto various protein substrates. Has no stringent fatty acid selectivity and in addition to palmitate can also transfer onto target proteins myristate from tetradecanoyl-CoA and stearate from octadecanoyl-CoA. May thereby regulate target proteins association and localization to membranes. In the nervous system, probably catalyzes the palmitoylation of synaptic proteins and is involved in the differentiation of dopaminergic neurons and the development of the diencephalon. The chain is Palmitoyltransferase ZDHHC15B (zdhhc15b) from Danio rerio (Zebrafish).